The primary structure comprises 166 residues: Plastocyanin, chloroplastic (166 aa).

Residues 1–67 (MASLTSAAVT…GAVLASNALA (67 aa)) constitute a chloroplast transit peptide. The region spanning 68 to 166 (VEVLLGGSDG…AGMAGKITVN (99 aa)) is the Plastocyanin-like domain. The Cu cation site is built by histidine 104, cysteine 151, histidine 154, and methionine 159.

The protein belongs to the plastocyanin family. Cu(2+) is required as a cofactor.

Its subcellular location is the plastid. The protein localises to the chloroplast thylakoid membrane. Its function is as follows. Participates in electron transfer between P700 and the cytochrome b6-f complex in photosystem I. This chain is Plastocyanin, chloroplastic (PETE), found in Fritillaria agrestis (Stinkbells).